Consider the following 351-residue polypeptide: Minor outer capsid protein P9 (351 aa).

The tract at residues 246–308 (GVPAALPQPD…KAVPSGNVSA (63 aa)) is disordered. Residues 285-297 (MIRKKVETSKDAP) show a composition bias toward basic and acidic residues.

This sequence belongs to the phytoreovirus minor outer capsid protein P9 family.

The protein localises to the virion. It is found in the host cytoplasm. Its function is as follows. Minor outer capsid protein. This chain is Minor outer capsid protein P9, found in Rice dwarf virus (isolate O) (RDV).